Here is a 442-residue protein sequence, read N- to C-terminus: Limonoid 1-O-acetyltransferse (442 aa).

Residues His155 and Asp381 each act as proton acceptor in the active site.

The protein belongs to the plant acyltransferase family. In terms of assembly, monomer.

The enzyme catalyses (1S)-1-hydroxy-luvungin A + acetyl-CoA = (1S)-1-acetoxy-luvungin A + CoA. The protein operates within secondary metabolite biosynthesis; terpenoid biosynthesis. Functionally, acetyltransferase involved in the biosynthesis of limonoids triterpene natural products such as limonin, a compound with insecticidal activity responsible for the bitter taste in citrus. Catalyzes the formation of (1S)-1-acetoxy-luvungin A from (1S)-1-hydroxy-luvungin A. This Citrus sinensis (Sweet orange) protein is Limonoid 1-O-acetyltransferse.